The sequence spans 376 residues: Probable ATP-dependent RNA helicase YfmL (376 aa).

Positions 35 to 205 (AQLIMDGKDV…RELAQEPEVL (171 aa)) constitute a Helicase ATP-binding domain. Position 48–55 (48–55 (SPTGTGKT)) interacts with ATP. Residues 153–156 (DETD) carry the DEAD box motif. The region spanning 231–374 (KLLQKLSRLE…EAVYAGGKLK (144 aa)) is the Helicase C-terminal domain.

It belongs to the DEAD box helicase family.

The enzyme catalyses ATP + H2O = ADP + phosphate + H(+). Its function is as follows. A probable DEAD-box RNA helicase that plays a role in ribosomal 50S subunit assembly. May be a non-specific RNA helicase. The polypeptide is Probable ATP-dependent RNA helicase YfmL (yfmL) (Bacillus subtilis (strain 168)).